Reading from the N-terminus, the 372-residue chain is Actin-related protein 2/3 complex subunit 1B (372 aa).

WD repeat units lie at residues 6-45 (FLVE…WTKV), 50-89 (EHNG…WKPT), 94-135 (RINR…WVCK), 140-179 (PIRS…VEER), 242-280 (SETL…GMLS), and 324-367 (LHKN…SALK).

It belongs to the WD repeat ARPC1 family. Component of the Arp2/3 complex composed of ACTR2/ARP2, ACTR3/ARP3, ARPC1B/p41-ARC, ARPC2/p34-ARC, ARPC3/p21-ARC, ARPC4/p20-ARC and ARPC5/p16-ARC.

It localises to the cytoplasm. Its subcellular location is the cytoskeleton. The protein localises to the nucleus. Functionally, component of the Arp2/3 complex, a multiprotein complex that mediates actin polymerization upon stimulation by nucleation-promoting factor (NPF). The Arp2/3 complex mediates the formation of branched actin networks in the cytoplasm, providing the force for cell motility. In addition to its role in the cytoplasmic cytoskeleton, the Arp2/3 complex also promotes actin polymerization in the nucleus, thereby regulating gene transcription and repair of damaged DNA. The Arp2/3 complex promotes homologous recombination (HR) repair in response to DNA damage by promoting nuclear actin polymerization, leading to drive motility of double-strand breaks (DSBs). The sequence is that of Actin-related protein 2/3 complex subunit 1B from Homo sapiens (Human).